The sequence spans 254 residues: Alcohol dehydrogenase (254 aa).

10–33 (FVAGLGGIGLDTSREIVKSGPKNL) contacts NAD(+). S138 is a binding site for substrate. Y151 serves as the catalytic Proton acceptor.

The protein belongs to the short-chain dehydrogenases/reductases (SDR) family. In terms of assembly, homodimer.

It carries out the reaction a primary alcohol + NAD(+) = an aldehyde + NADH + H(+). The enzyme catalyses a secondary alcohol + NAD(+) = a ketone + NADH + H(+). The chain is Alcohol dehydrogenase (Adh) from Drosophila adiastola (Fruit fly).